A 255-amino-acid chain; its full sequence is Keratin-associated protein 10-2 (255 aa).

22 tandem repeats follow at residues Cys-26–Pro-30, Cys-36–Ala-40, Cys-57–Ala-61, Cys-79–Ser-83, Cys-89–Ser-93, Cys-99–Val-103, Cys-104–Val-108, Cys-109–Val-113, Cys-114–Ser-118, Cys-120–Ser-124, Cys-130–Ser-134, Cys-145–Val-149, Cys-150–Thr-154, Cys-162–Ser-166, Cys-172–Ser-176, Cys-182–Val-186, Cys-187–Val-191, Cys-192–Ile-196, Cys-197–Val-201, Cys-209–Ser-213, Cys-219–Ser-223, and Cys-224–Ser-228. A 22 X 5 AA repeats of C-C-X(3) region spans residues Cys-26–Ser-228.

The protein belongs to the KRTAP type 10 family. As to quaternary structure, interacts with hair keratins. As to expression, restricted to a narrow region of the hair fiber cuticle, lying approximately 20 cell layers above the apex of the dermal papilla of the hair root; not detected in any other tissues.

In terms of biological role, in the hair cortex, hair keratin intermediate filaments are embedded in an interfilamentous matrix, consisting of hair keratin-associated proteins (KRTAP), which are essential for the formation of a rigid and resistant hair shaft through their extensive disulfide bond cross-linking with abundant cysteine residues of hair keratins. The matrix proteins include the high-sulfur and high-glycine-tyrosine keratins. The polypeptide is Keratin-associated protein 10-2 (KRTAP10-2) (Homo sapiens (Human)).